Reading from the N-terminus, the 110-residue chain is Insulin (110 aa).

Residues 1 to 24 (MALWMHLLTVLALLALWGPNTGQA) form the signal peptide. Disulfide bonds link Cys31-Cys96, Cys43-Cys109, and Cys95-Cys100. The propeptide at 57-87 (ELEDPQVEQTELGMGLGAGGLQPLALEMALQ) is c peptide.

Belongs to the insulin family. As to quaternary structure, heterodimer of a B chain and an A chain linked by two disulfide bonds.

It localises to the secreted. Insulin decreases blood glucose concentration. It increases cell permeability to monosaccharides, amino acids and fatty acids. It accelerates glycolysis, the pentose phosphate cycle, and glycogen synthesis in liver. The polypeptide is Insulin (INS) (Cavia porcellus (Guinea pig)).